A 279-amino-acid polypeptide reads, in one-letter code: Acyl-coenzyme A thioesterase MBLAC2 (279 aa).

Ser2 carries the N-acetylserine modification. Zn(2+)-binding residues include His83, His85, Asp87, His88, His170, Asp189, and His231. Cys254 carries the S-palmitoyl cysteine lipid modification.

It belongs to the metallo-beta-lactamase superfamily. Glyoxalase II family. Zn(2+) serves as cofactor. In terms of processing, palmitoylated on Cys-254 by ZDHHC20.

The protein localises to the endoplasmic reticulum membrane. It is found in the cell membrane. The catalysed reaction is hexadecanoyl-CoA + H2O = hexadecanoate + CoA + H(+). It carries out the reaction dodecanoyl-CoA + H2O = dodecanoate + CoA + H(+). It catalyses the reaction tetradecanoyl-CoA + H2O = tetradecanoate + CoA + H(+). The enzyme catalyses octadecanoyl-CoA + H2O = octadecanoate + CoA + H(+). The catalysed reaction is a beta-lactam + H2O = a substituted beta-amino acid. Beta-lactamase activity is inhibited by sulbactam. Acyl-CoA thioesterases are a group of enzymes that catalyze the hydrolysis of acyl-CoAs to the free fatty acid and coenzyme A (CoASH), providing the potential to regulate intracellular levels of acyl-CoAs, free fatty acids and CoASH. Has an acyl-CoA thioesterase activity towards the long chain fatty acyl-CoA thioester palmitoyl-CoA (hexadecanoyl-CoA; C16:0-CoA). Displays a substrate preference for fatty acyl-CoAs with chain-lengths C12-C18. Possesses beta-lactamase activity, catalyzing the hydrolysis of penicillin G and nitrocefin. Exhibits no activity towards other beta-lactam antibiotic classes including cephalosporins (cefotaxime) and carbapenems (imipenem). The chain is Acyl-coenzyme A thioesterase MBLAC2 (MBLAC2) from Homo sapiens (Human).